The sequence spans 313 residues: Aspartate carbamoyltransferase catalytic subunit (313 aa).

Arg66 and Thr67 together coordinate carbamoyl phosphate. L-aspartate is bound at residue Lys94. Arg116, His144, and Gln147 together coordinate carbamoyl phosphate. L-aspartate-binding residues include Arg177 and Arg231. Carbamoyl phosphate is bound by residues Gly272 and Pro273.

Belongs to the aspartate/ornithine carbamoyltransferase superfamily. ATCase family. As to quaternary structure, heterododecamer (2C3:3R2) of six catalytic PyrB chains organized as two trimers (C3), and six regulatory PyrI chains organized as three dimers (R2).

The catalysed reaction is carbamoyl phosphate + L-aspartate = N-carbamoyl-L-aspartate + phosphate + H(+). The protein operates within pyrimidine metabolism; UMP biosynthesis via de novo pathway; (S)-dihydroorotate from bicarbonate: step 2/3. Functionally, catalyzes the condensation of carbamoyl phosphate and aspartate to form carbamoyl aspartate and inorganic phosphate, the committed step in the de novo pyrimidine nucleotide biosynthesis pathway. The chain is Aspartate carbamoyltransferase catalytic subunit from Pelagibacter ubique (strain HTCC1062).